We begin with the raw amino-acid sequence, 858 residues long: Myosin-K heavy chain (858 aa).

Positions 7 to 820 (SGVDDLVLVS…TIFVMEDLLM (814 aa)) constitute a Myosin motor domain. ATP is bound at residue 100–107 (GESGAGKT). The interval 121-265 (SPNNSSGGGI…GGGYGGSSKT (145 aa)) is disordered. Gly residues-rich tracts occupy residues 126 to 139 (SGGG…GNGG) and 157 to 182 (RGMG…SRGG). The span at 183 to 228 (GPPPTRGRGGPPPPIPQNRGAPPPVSNGGAPPPVARGPVAPPPTRG) shows a compositional bias: pro residues. The span at 233-245 (RGGGPANRGGRGG) shows a compositional bias: gly residues. An actin-binding region spans residues 712–722 (PHYIRCIKPND). The interval 821-858 (QKIDPIGYKNRVQAYKENEKLAQMKQGKHSMKQKCLIQ) is tail.

Belongs to the TRAFAC class myosin-kinesin ATPase superfamily. Myosin family.

Its subcellular location is the cytoplasm. Functionally, myosins are actin-based motor molecules with ATPase activity. Involved in phagocytosis and motility, and in the maintenance and dynamics of cell cortex. This Dictyostelium discoideum (Social amoeba) protein is Myosin-K heavy chain (myoK).